The chain runs to 130 residues: Small ribosomal subunit protein uS8 (130 aa).

Belongs to the universal ribosomal protein uS8 family. Part of the 30S ribosomal subunit. Contacts proteins S5 and S12.

Its function is as follows. One of the primary rRNA binding proteins, it binds directly to 16S rRNA central domain where it helps coordinate assembly of the platform of the 30S subunit. In Idiomarina loihiensis (strain ATCC BAA-735 / DSM 15497 / L2-TR), this protein is Small ribosomal subunit protein uS8.